The following is a 273-amino-acid chain: NLP effector protein 10 (273 aa).

Positions 1–21 (MKLPTFLIGFVALLVTSNGSA) are cleaved as a signal peptide. N-linked (GlcNAc...) asparagine glycosylation occurs at N91. The Conserved undecapeptide motif motif lies at 129 to 139 (AIMYAWYLPRA). A Conserved heptapeptide motif motif is present at residues 149 to 155 (GHRHYWL).

This sequence belongs to the Necrosis inducing protein (NPP1) family.

It is found in the secreted. Its function is as follows. Secreted effector that acts as a pathogen-associated molecular pattern (PAMP) recognized by the plant immune system. Seems not to induce necrosis in Nicotiana benthamiana leaves but significantly improves disease resistance of Arabidopsis thaliana to Hyaloperonospora arabidopsidis and causes an inhibition of plant growth which is typically associated with enhanced immunity when over-expressed in Arabidopsis. The protein is NLP effector protein 10 of Plasmopara viticola (Downy mildew of grapevine).